A 386-amino-acid chain; its full sequence is Acyl-[acyl-carrier-protein] dehydrogenase MbtN (386 aa).

This sequence belongs to the acyl-CoA dehydrogenase family. FAD serves as cofactor.

It participates in siderophore biosynthesis; mycobactin biosynthesis. Functionally, catalyzes the dehydrogenation at the alpha-beta position of ACP-bound acyl chains. This results in the introduction of a double bond in the lipidic chain, which is further transferred to the epsilon-amino group of lysine residue in the mycobactin core by MbtK. The chain is Acyl-[acyl-carrier-protein] dehydrogenase MbtN (mbtN) from Mycobacterium bovis (strain ATCC BAA-935 / AF2122/97).